Consider the following 305-residue polypeptide: Acetaldehyde dehydrogenase (305 aa).

13–16 (SGNI) provides a ligand contact to NAD(+). C128 (acyl-thioester intermediate) is an active-site residue. Residues 159-167 (SAGPGTRQN) and N278 contribute to the NAD(+) site.

The protein belongs to the acetaldehyde dehydrogenase family.

The catalysed reaction is acetaldehyde + NAD(+) + CoA = acetyl-CoA + NADH + H(+). The polypeptide is Acetaldehyde dehydrogenase (Roseiflexus sp. (strain RS-1)).